Here is a 460-residue protein sequence, read N- to C-terminus: Solute carrier family 52, riboflavin transporter, member 3 (460 aa).

Over 1–6 (MAFLTH) the chain is Cytoplasmic. A helical membrane pass occupies residues 7–27 (LLVCVFGMGSWVAINGLWVEL). The Extracellular portion of the chain corresponds to 28–37 (PLLVTELPEA). A helical transmembrane segment spans residues 38-58 (WYLPSYLTVVIQLANIGPLLV). Over 59-71 (TLMHRFRPGCLSE) the chain is Cytoplasmic. A helical transmembrane segment spans residues 72 to 92 (VPVIFLILCVGTAACILLAFL). The Extracellular portion of the chain corresponds to 93–105 (WNVTSWIQGGQHS). Asparagine 94 carries N-linked (GlcNAc...) asparagine glycosylation. The chain crosses the membrane as a helical span at residues 106–126 (VAFIVLTFFLALVDCTSSVTF). Over 127-137 (LPFMSQLPTYY) the chain is Cytoplasmic. The chain crosses the membrane as a helical span at residues 138 to 158 (LTTFFIGEGLSGLLPALVALV). Residues 159-211 (QGSGITTCVNVTETPGTTLNTMETPITQGNLSPSLPSPSWHQESRYLAPRFSP) lie on the Extracellular side of the membrane. N-linked (GlcNAc...) asparagine glycosylation is present at asparagine 168. A helical membrane pass occupies residues 212 to 232 (LLFFLLLSFLTGCCLVAFFLL). Topologically, residues 233–291 (QRQPWGRQGSIEDLLHSQVTLHSIRPRDTEDTSSLGAPVSSPGKGSVEASVASLRPAQL) are cytoplasmic. Serine 242 and serine 266 each carry phosphoserine. A helical membrane pass occupies residues 292-312 (AFIYSVVAFVNALTNGVLPSV). The Extracellular portion of the chain corresponds to 313–326 (QTYSCLPYGPVAYH). The chain crosses the membrane as a helical span at residues 327–347 (LSATLSSVASPLACFLPIFLP). Over 348 to 350 (NRS) the chain is Cytoplasmic. The helical transmembrane segment at 351–371 (LLFLGVLTVLGTGFGAYNMAM) threads the bilayer. Residues 372–387 (AAMSPCPVLQGHWGGE) lie on the Extracellular side of the membrane. An intrachain disulfide couples cysteine 377 to cysteine 454. A helical membrane pass occupies residues 388–408 (VLIVLSWVLFAACLSYVKVML). Over 409–418 (GVILRDRSRS) the chain is Cytoplasmic. Residues 419-439 (ALLWCGAAVQLGSLIGALLMF) traverse the membrane as a helical segment. Residues 440–460 (PLVNVLKLFSSADYCSLDCSV) lie on the Extracellular side of the membrane.

It belongs to the riboflavin transporter family. Within the small intestine, it is particularly expressed in the jujenum and the ileum. Almost negligible expression in the stomach, duodenum, and large intestine.

The protein localises to the cell membrane. The enzyme catalyses riboflavin(in) = riboflavin(out). In terms of biological role, plasma membrane transporter mediating the uptake by cells of the water soluble vitamin B2/riboflavin that plays a key role in biochemical oxidation-reduction reactions of the carbohydrate, lipid, and amino acid metabolism. The sequence is that of Solute carrier family 52, riboflavin transporter, member 3 (Slc52a3) from Mus musculus (Mouse).